The sequence spans 1023 residues: 1-phosphatidylinositol 4,5-bisphosphate phosphodiesterase beta-4 (1023 aa).

The PI-PLC X-box domain maps to 149 to 299 (QEMDHPLAHY…LKRKILIKKQ (151 aa)). Residues H164 and H211 contribute to the active site. One can recognise a PI-PLC Y-box domain in the interval 413–529 (LSTMINYAQP…GYLLKPDFMR (117 aa)). A C2 domain is found at 532-657 (DRTFDPFSET…SLRNEGNKPL (126 aa)). 2 disordered regions span residues 711–742 (ADVP…SELR) and 930–958 (KISM…VREL). 2 stretches are compositionally biased toward polar residues: residues 729 to 742 (AKAN…SELR) and 933 to 942 (MENSKAISQD). Residue T734 is modified to Phosphothreonine. The span at 943 to 957 (KSIKNKAERERRVRE) shows a compositional bias: basic and acidic residues.

The cofactor is Ca(2+). Post-translationally, the N-terminus is blocked. Preferentially expressed in the retina.

It is found in the cell membrane. The enzyme catalyses a 1,2-diacyl-sn-glycero-3-phospho-(1D-myo-inositol-4,5-bisphosphate) + H2O = 1D-myo-inositol 1,4,5-trisphosphate + a 1,2-diacyl-sn-glycerol + H(+). It catalyses the reaction a 1,2-diacyl-sn-glycero-3-phospho-(1D-myo-inositol) + H2O = 1D-myo-inositol 1-phosphate + a 1,2-diacyl-sn-glycerol + H(+). Functionally, activated phosphatidylinositol-specific phospholipase C enzymes catalyze the production of the second messenger molecules diacylglycerol (DAG) and inositol 1,4,5-trisphosphate (IP3) involved in G-protein coupled receptor signaling pathways. PLCB4 is a direct effector of the endothelin receptor signaling pathway that plays an essential role in lower jaw and middle ear structures development. This Bos taurus (Bovine) protein is 1-phosphatidylinositol 4,5-bisphosphate phosphodiesterase beta-4 (PLCB4).